A 259-amino-acid chain; its full sequence is Flap endonuclease Xni (259 aa).

Residue Asp-109 participates in Mg(2+) binding. Residues Val-165 to Ser-255 form the 5'-3' exonuclease domain. Leu-176, Pro-185, Val-187, and Ile-190 together coordinate K(+). Residues Gly-189–Ala-194 are interaction with DNA.

Belongs to the Xni family. Mg(2+) serves as cofactor. It depends on K(+) as a cofactor.

Its function is as follows. Has flap endonuclease activity. During DNA replication, flap endonucleases cleave the 5'-overhanging flap structure that is generated by displacement synthesis when DNA polymerase encounters the 5'-end of a downstream Okazaki fragment. The protein is Flap endonuclease Xni of Vibrio cholerae serotype O1 (strain ATCC 39315 / El Tor Inaba N16961).